An 86-amino-acid polypeptide reads, in one-letter code: Small ribosomal subunit protein bS20 (86 aa).

Over residues 1–16 the composition is skewed to basic and acidic residues; the sequence is MANIKSQEKRIRTNER. Residues 1-25 form a disordered region; sequence MANIKSQEKRIRTNERRRLRNQSVK.

Belongs to the bacterial ribosomal protein bS20 family.

Functionally, binds directly to 16S ribosomal RNA. This is Small ribosomal subunit protein bS20 from Mycobacterium sp. (strain JLS).